We begin with the raw amino-acid sequence, 105 residues long: Secreted effector protein PINE1 (105 aa).

Residues Met1–Ala21 form the signal peptide.

In terms of assembly, interacts with Arabidopsis thaliana PGIP1.

The protein resides in the secreted. In terms of biological role, effector protein required for full virulence. Directly interacts with and functionally inactivates PG-inhibiting proteins (PGIPs). PGIPs are a defense mechanism of infected plants, that inhibit the plant pathogens secreted polygalacturonases (PGs) used to degrade the plant cell wall. Excerts its function by interacting with host PGIPs to negate their polygalacturonase-inhibiting function via enhanced dissociation of PGIPs from PGs. The sequence is that of Secreted effector protein PINE1 from Sclerotinia sclerotiorum (strain ATCC 18683 / 1980 / Ss-1) (White mold).